We begin with the raw amino-acid sequence, 418 residues long: Protease LasA (418 aa).

The N-terminal stretch at 1-31 (MQHKRSRALASPRSPFLFALLALAVGGTANA) is a signal peptide. A propeptide spanning residues 32–236 (HDDGLPAFRY…ARQLQAKAAL (205 aa)) is cleaved from the precursor. Residues His-259 and Asp-272 each coordinate Zn(2+). The cysteines at positions 301 and 347 are disulfide-linked. Active-site proton donor/acceptor residues include His-317 and His-356. His-358 is a Zn(2+) binding site. Cys-391 and Cys-406 are oxidised to a cystine.

It belongs to the peptidase M23A family. Requires Zn(2+) as cofactor.

It is found in the secreted. Functionally, involved in proteolysis and elastolysis (degradation of the host protein elastin). Has staphylolytic activity (degrades pentaglycine cross-links in cell wall peptidoglycan), preferring Gly-Gly-|-X substrates where X is Ala or Gly. Enhances the elastolytic but not proteolytic activity of elastase (lasB) and elastolytic activity of other proteases. Degradation of elastin is likely to contribute to the pathogenicity of P.aeruginosa. This Pseudomonas aeruginosa (strain UCBPP-PA14) protein is Protease LasA (lasA).